A 46-amino-acid polypeptide reads, in one-letter code: Iota-conotoxin-like R11.7 (46 aa).

4-hydroxyproline occurs at positions 2 and 11. Cystine bridges form between C5/C19, C12/C22, C18/C27, and C21/C38. At P29 the chain carries 4-hydroxyproline. F44 carries the post-translational modification D-phenylalanine.

The protein belongs to the conotoxin I1 superfamily. In terms of tissue distribution, expressed by the venom duct.

Its subcellular location is the secreted. Iota-conotoxins bind to voltage-gated sodium channels (Nav) and act as agonists by shifting the voltage-dependence of activation to more hyperpolarized levels. Produces general excitatory symptoms. This chain is Iota-conotoxin-like R11.7, found in Conus radiatus (Rayed cone).